We begin with the raw amino-acid sequence, 1192 residues long: Methionine synthase (1192 aa).

In terms of domain architecture, Hcy-binding spans 1–312 (MTAADKHLYD…AHIREVAAAV (312 aa)). Zn(2+)-binding residues include cysteine 231, cysteine 297, and cysteine 298. The 259-residue stretch at 343-601 (VLVIGERTNA…RIPEEQRNVA (259 aa)) folds into the Pterin-binding domain. The B12-binding N-terminal domain occupies 635-728 (RLAELAGLPL…HMERSDDDSG (94 aa)). The B12-binding domain maps to 729-866 (KGRIVLATVK…SAKRGEAPDE (138 aa)). Methylcob(III)alamin contacts are provided by residues 739-743 (GDVHD), histidine 742, serine 787, and alanine 845. A disordered region spans residues 860 to 904 (RGEAPDENSPEAIKAREKEAERKARHQRSKRIAAQRKAAEEPVEV). Over residues 872-881 (IKAREKEAER) the composition is skewed to basic and acidic residues. Positions 882-893 (KARHQRSKRIAA) are enriched in basic residues. An AdoMet activation domain is found at 893 to 1192 (AQRKAAEEPV…HHPEAKYFNV (300 aa)). Residues aspartate 940, arginine 1135, and 1189 to 1190 (YF) contribute to the S-adenosyl-L-methionine site.

It belongs to the vitamin-B12 dependent methionine synthase family. It depends on methylcob(III)alamin as a cofactor. Zn(2+) serves as cofactor.

The catalysed reaction is (6S)-5-methyl-5,6,7,8-tetrahydrofolate + L-homocysteine = (6S)-5,6,7,8-tetrahydrofolate + L-methionine. It participates in amino-acid biosynthesis; L-methionine biosynthesis via de novo pathway; L-methionine from L-homocysteine (MetH route): step 1/1. In terms of biological role, catalyzes the transfer of a methyl group from methyl-cobalamin to homocysteine, yielding enzyme-bound cob(I)alamin and methionine. Subsequently, remethylates the cofactor using methyltetrahydrofolate. This is Methionine synthase (metH) from Mycobacterium tuberculosis (strain ATCC 25618 / H37Rv).